The sequence spans 422 residues: MIANSSTDVSVADQKFLNVAKSNQIDPDAVPISRLDSEGHSIFAEWRPKRPFLRREDGIFLVLRADHIFLLGTDPRTRQIETELMLNRGVKAGAVFDFIDHSMLFSNGETHGKRRSGLSKAFSFRMVEALRPEIAKITECLWDDLQKVDDFNFTEMYASQLPALTIASVLGLPSEDTPFFTRLVYKVSRCLSPSWRDEEFEEIEASAIELQDYVRSVIADSGRRMRDDFLSRYLKAVREAGTLSPIEEIMQLMLIILAGSDTTRTAMVMVTALALQNPALWSSLRGNQSYVAAAVEEGLRFEPPVGSFPRLALKDIDLDGYVLPKGSLLALSVMSGLRDEKHYEHPQLFDVGRQQMRWHLGFGAGVHRCLGETLARIELQEGLRTLLRRAPNLAVVGDWPRMMGHGGIRRATDMMVKLSFDL.

C369 lines the heme pocket.

This sequence belongs to the cytochrome P450 family. It depends on heme as a cofactor.

Not essential for virulence, but may be involved in the detoxification of plant protective agents at the site of wounding. The polypeptide is Cytochrome P450-pinF1, plant-inducible (cyp103) (Rhizobium radiobacter (Agrobacterium tumefaciens)).